Reading from the N-terminus, the 126-residue chain is MSAKGSLLRLLWQCGMTRAAPESCRYLYTSSWRADCNRASLTRVHRQTYARLYPILLVKQDGSTIHIRYPEPRRILTMPVDLDSLSPEERRARFRKREGQLKEKKEEPELADDFDVEQYKQFWTKK.

The transit peptide at 1 to 34 (MSAKGSLLRLLWQCGMTRAAPESCRYLYTSSWRA) directs the protein to the mitochondrion. Serine 86 carries the post-translational modification Phosphoserine.

This sequence belongs to the mitochondrion-specific ribosomal protein mL55 family. As to quaternary structure, component of the mitochondrial ribosome large subunit (39S) which comprises a 16S rRNA and about 50 distinct proteins.

It is found in the mitochondrion. The chain is Large ribosomal subunit protein mL55 (MRPL55) from Bos taurus (Bovine).